Here is a 347-residue protein sequence, read N- to C-terminus: uncharacterized protein (347 aa).

C39, H65, C95, C98, C101, C109, and E152 together coordinate Zn(2+).

It belongs to the zinc-containing alcohol dehydrogenase family. Zn(2+) serves as cofactor.

This is an uncharacterized protein from Escherichia coli (strain K12).